The sequence spans 179 residues: Large ribosomal subunit protein uL5 (179 aa).

The protein belongs to the universal ribosomal protein uL5 family. As to quaternary structure, part of the 50S ribosomal subunit; part of the 5S rRNA/L5/L18/L25 subcomplex. Contacts the 5S rRNA and the P site tRNA. Forms a bridge to the 30S subunit in the 70S ribosome.

In terms of biological role, this is one of the proteins that bind and probably mediate the attachment of the 5S RNA into the large ribosomal subunit, where it forms part of the central protuberance. In the 70S ribosome it contacts protein S13 of the 30S subunit (bridge B1b), connecting the 2 subunits; this bridge is implicated in subunit movement. Contacts the P site tRNA; the 5S rRNA and some of its associated proteins might help stabilize positioning of ribosome-bound tRNAs. This Shewanella denitrificans (strain OS217 / ATCC BAA-1090 / DSM 15013) protein is Large ribosomal subunit protein uL5.